The sequence spans 300 residues: Solute carrier family 25 member 35 (300 aa).

3 Solcar repeats span residues 1-90 (MDFL…AEAG), 100-193 (HSPA…TKDL), and 203-294 (QSWK…LRSL). The next 6 helical transmembrane spans lie at 38–58 (TYQR…KVDG), 59–79 (LAAL…MNGI), 91–119 (GYLH…GAYL), 169–190 (ALGG…FSST), 205–225 (WKLA…AMAP), and 277–300 (LGPH…TDTK).

Belongs to the mitochondrial carrier (TC 2.A.29) family.

It localises to the mitochondrion inner membrane. The enzyme catalyses a dicarboxylate(in) + sulfate(out) = a dicarboxylate(out) + sulfate(in). Functionally, putative antiporter that exchanges dicarboxylates and sulfur oxoanions across the inner membrane of mitochondria. This is Solute carrier family 25 member 35 (SLC25A35) from Homo sapiens (Human).